Here is a 1264-residue protein sequence, read N- to C-terminus: Kinesin-like protein KIN-14B (1264 aa).

Residues 1–10 are compositionally biased toward polar residues; the sequence is MAEQKSTNMW. Residues 1–52 form a disordered region; the sequence is MAEQKSTNMWNWEVTGFESKKSPSSEEGVHRTPSSMLRRYSIPKNSLPPHSS. The segment covering 18–30 has biased composition (basic and acidic residues); the sequence is ESKKSPSSEEGVH. The stretch at 53-84 forms a coiled coil; sequence ELASKVQSLKDKVQLAKDDYVGLRQEATDLQE. Residues 138–452 enclose the Kinesin motor domain; it reads NVKVFCRARP…LNYAARARNT (315 aa). Residue 219-226 participates in ATP binding; the sequence is GQTHAGKT. 3 coiled-coil regions span residues 462-511, 545-592, and 617-640; these read IKKW…YNEV, QLRN…LKSD, and TKKL…ENEK. The segment at 588 to 615 is disordered; the sequence is ALKSDMTRSRDPLEPQPRAAENTLDSSA. Over residues 589 to 600 the composition is skewed to basic and acidic residues; it reads LKSDMTRSRDPL. Over residues 652 to 668 the composition is skewed to low complexity; sequence SSTQVSSPSSKASPTVQ. 2 disordered regions span residues 652 to 684 and 1117 to 1136; these read SSTQ…SVDK and PEQE…SISS.

Belongs to the TRAFAC class myosin-kinesin ATPase superfamily. Kinesin family. KIN-14 subfamily. As to quaternary structure, homodimer and heterodimer with KCA1. Interacts with CDKA-1. Interacts with At4g14310. Expressed in roots, leaves, stems and flowers.

Its subcellular location is the cell membrane. In terms of biological role, kinesin-like protein required for chloroplast movements and anchor to the plasma membrane. Mediates chloroplast movement via chloroplast actin (cp-actin) filaments. Required for the chloroplast avoidance response under high intensity blue light. Mediates redundantly with CHUP1 the nuclear avoidance response under high intensity blue light. May be involved in division plane determination. The protein is Kinesin-like protein KIN-14B of Arabidopsis thaliana (Mouse-ear cress).